The chain runs to 968 residues: C-1-tetrahydrofolate synthase, cytoplasmic (968 aa).

The methylenetetrahydrofolate dehydrogenase and cyclohydrolase stretch occupies residues 1-338 (MSAQYQRFLK…ERLAKSQWAL (338 aa)). Substrate contacts are provided by residues 86-90 (YIRMK) and 133-135 (VQM). NADP(+) contacts are provided by residues 205–207 (GRS) and serine 230. 305–309 (PGGVG) contacts substrate. The interval 339–968 (QTLPLKPQRP…TETGEIEGLF (630 aa)) is formyltetrahydrofolate synthetase. 413–420 (TPLGEGKT) provides a ligand contact to ATP.

The protein in the N-terminal section; belongs to the tetrahydrofolate dehydrogenase/cyclohydrolase family. It in the C-terminal section; belongs to the formate--tetrahydrofolate ligase family. In terms of assembly, homodimer. As to expression, present in all tissues.

The protein localises to the cytoplasm. The enzyme catalyses (6R)-5,10-methylene-5,6,7,8-tetrahydrofolate + NADP(+) = (6R)-5,10-methenyltetrahydrofolate + NADPH. The catalysed reaction is (6R)-5,10-methenyltetrahydrofolate + H2O = (6R)-10-formyltetrahydrofolate + H(+). It carries out the reaction (6S)-5,6,7,8-tetrahydrofolate + formate + ATP = (6R)-10-formyltetrahydrofolate + ADP + phosphate. Its pathway is one-carbon metabolism; tetrahydrofolate interconversion. The sequence is that of C-1-tetrahydrofolate synthase, cytoplasmic (pug) from Drosophila melanogaster (Fruit fly).